The sequence spans 534 residues: Probable alpha-galactosidase A (534 aa).

The first 25 residues, 1-25 (MRLITRWIPLANALASTMPVQVVAS), serve as a signal peptide directing secretion. Cys47 and Cys79 are joined by a disulfide. 4 N-linked (GlcNAc...) asparagine glycosylation sites follow: Asn50, Asn88, Asn94, and Asn124. Residues Cys127 and Cys157 are joined by a disulfide bond. Asp155 acts as the Nucleophile in catalysis. N-linked (GlcNAc...) asparagine glycosylation occurs at Asn204. Asp213 (proton donor) is an active-site residue. The region spanning 413-534 (CSQVIPTGLI…GLPAGVHVAL (122 aa)) is the Ricin B-type lectin domain. Cys430 and Cys443 are oxidised to a cystine. A glycan (N-linked (GlcNAc...) asparagine) is linked at Asn444. An intrachain disulfide couples Cys468 to Cys481.

The protein belongs to the glycosyl hydrolase 27 family.

The protein localises to the secreted. The catalysed reaction is Hydrolysis of terminal, non-reducing alpha-D-galactose residues in alpha-D-galactosides, including galactose oligosaccharides, galactomannans and galactolipids.. In terms of biological role, hydrolyzes a variety of simple alpha-D-galactoside as well as more complex molecules such as oligosaccharides and polysaccharides. In Aspergillus oryzae (strain ATCC 42149 / RIB 40) (Yellow koji mold), this protein is Probable alpha-galactosidase A (aglA).